A 419-amino-acid polypeptide reads, in one-letter code: Probable dual-specificity RNA methyltransferase RlmN (419 aa).

Residues 1-21 are disordered; sequence MTAESDSPDGPVSAGTGRPVR. Glu-124 serves as the catalytic Proton acceptor. One can recognise a Radical SAM core domain in the interval 130-369; that stretch reads YPDRATVCVS…ATTVRDTRGR (240 aa). An intrachain disulfide couples Cys-137 to Cys-375. [4Fe-4S] cluster-binding residues include Cys-144, Cys-148, and Cys-151. Residues 199–200, Ser-233, 256–258, and Asn-332 contribute to the S-adenosyl-L-methionine site; these read GE and SLH. The S-methylcysteine intermediate role is filled by Cys-375. Residues 383–419 are disordered; the sequence is AGRARRVESARPVESARPVGVAGAASGSPAHGSRVLR. Residues 397–419 show a composition bias toward low complexity; sequence SARPVGVAGAASGSPAHGSRVLR.

It belongs to the radical SAM superfamily. RlmN family. [4Fe-4S] cluster serves as cofactor.

The protein resides in the cytoplasm. The catalysed reaction is adenosine(2503) in 23S rRNA + 2 reduced [2Fe-2S]-[ferredoxin] + 2 S-adenosyl-L-methionine = 2-methyladenosine(2503) in 23S rRNA + 5'-deoxyadenosine + L-methionine + 2 oxidized [2Fe-2S]-[ferredoxin] + S-adenosyl-L-homocysteine. It catalyses the reaction adenosine(37) in tRNA + 2 reduced [2Fe-2S]-[ferredoxin] + 2 S-adenosyl-L-methionine = 2-methyladenosine(37) in tRNA + 5'-deoxyadenosine + L-methionine + 2 oxidized [2Fe-2S]-[ferredoxin] + S-adenosyl-L-homocysteine. Specifically methylates position 2 of adenine 2503 in 23S rRNA and position 2 of adenine 37 in tRNAs. This Frankia alni (strain DSM 45986 / CECT 9034 / ACN14a) protein is Probable dual-specificity RNA methyltransferase RlmN.